Consider the following 76-residue polypeptide: MPTEGRRRGVSAAMIKHYLLMTLVCIPLALLYVCLEWFFGNTWVTVGVFFGVLVVLRLGLYLYRRSKGIRDGYLDE.

2 consecutive transmembrane segments (helical) span residues Leu19 to Phe39 and Trp43 to Tyr63.

The protein resides in the membrane. Immunity protein that plays a role in preventing early activation of toxin Tse5. This chain is Immune protein Tsi5, found in Pseudomonas aeruginosa (strain ATCC 15692 / DSM 22644 / CIP 104116 / JCM 14847 / LMG 12228 / 1C / PRS 101 / PAO1).